The sequence spans 485 residues: Adenosylhomocysteinase (485 aa).

Substrate is bound by residues threonine 64, aspartate 139, and glutamate 205. Position 206 to 208 (206 to 208) interacts with NAD(+); that stretch reads TTT. Positions 235 and 239 each coordinate substrate. NAD(+) contacts are provided by residues asparagine 240, 269 to 274, glutamate 292, asparagine 327, and 348 to 350; these read GYGDVG and IGH.

The protein belongs to the adenosylhomocysteinase family. Homotetramer. The cofactor is NAD(+).

The enzyme catalyses S-adenosyl-L-homocysteine + H2O = L-homocysteine + adenosine. It participates in amino-acid biosynthesis; L-homocysteine biosynthesis; L-homocysteine from S-adenosyl-L-homocysteine: step 1/1. Its function is as follows. Adenosylhomocysteine is a competitive inhibitor of S-adenosyl-L-methionine-dependent methyl transferase reactions; therefore adenosylhomocysteinase may play a key role in the control of methylations via regulation of the intracellular concentration of adenosylhomocysteine. This chain is Adenosylhomocysteinase (SAHH), found in Mesembryanthemum crystallinum (Common ice plant).